We begin with the raw amino-acid sequence, 424 residues long: MSDTSLEKGNEGPTAEAPKVAPPTVPDGGLQAWLTVAGASVALFVSFGWVNCIALFQSEYQTNQLKGYSSSDVSWITSMEFFFMLSTSPVSGRLFDSYGPHVPIAIGSFLHVFGLMMASLSTKYYQLMLSQSVVSGIGSSLIFTPAMTAPQTWFRQKRGIVGGLTVAGSSLGGVVFPLMVQHLLPQVGFGWTMRICAFMILGLLVFANVTISSNFEHKPRPFSVIHYIGPLRDTNFVLLCVASFFMYWGIFIPFDYIVVEAIHYGMSTQMAWSLVPILNGASFFGRTVPNYIADKAGRFNVMIVMTTLSAILVLALWLPARGNGALITFAALFGITSGAIIGLGPVLIVQISPMSELGYRVGTVLAFAAVGTLTSPPIGGAIAASDGGSYTYTCVFSGVSFLIGTLGLAALRVRLSGWGLTTKI.

The segment covering 1–10 (MSDTSLEKGN) has biased composition (basic and acidic residues). The tract at residues 1–23 (MSDTSLEKGNEGPTAEAPKVAPP) is disordered. Helical transmembrane passes span 36–56 (VAGA…IALF), 102–122 (VPIA…SLST), 127–147 (LMLS…TPAM), 160–180 (IVGG…PLMV), and 187–207 (VGFG…LVFA). Asn-208 is a glycosylation site (N-linked (GlcNAc...) asparagine). The next 6 helical transmembrane spans lie at 239–259 (LCVA…YIVV), 265–285 (GMST…SFFG), 299–319 (FNVM…LWLP), 329–349 (FAAL…VLIV), 364–384 (VLAF…AIAA), and 391–411 (TYTC…LAAL).

This sequence belongs to the major facilitator superfamily. Monocarboxylate porter (TC 2.A.1.13) family.

The protein localises to the membrane. Functionally, MFS-type transporter; part of the gene cluster that mediates the biosynthesis of oxopyrrolidines, polyketide-amino acid hybrid compounds with feature structures of tetramic acid. The chain is MFS-type transporter opdF from Penicillium oxalicum (strain 114-2 / CGMCC 5302) (Penicillium decumbens).